A 256-amino-acid polypeptide reads, in one-letter code: Glutamate racemase (256 aa).

Residues 11-12 (DS) and 43-44 (YG) contribute to the substrate site. C74 acts as the Proton donor/acceptor in catalysis. 75 to 76 (NT) is a substrate binding site. Catalysis depends on C182, which acts as the Proton donor/acceptor. A substrate-binding site is contributed by 183 to 184 (TH).

It belongs to the aspartate/glutamate racemases family.

It carries out the reaction L-glutamate = D-glutamate. It functions in the pathway cell wall biogenesis; peptidoglycan biosynthesis. Its function is as follows. Provides the (R)-glutamate required for cell wall biosynthesis. The sequence is that of Glutamate racemase from Leptospira interrogans serogroup Icterohaemorrhagiae serovar Lai (strain 56601).